A 147-amino-acid chain; its full sequence is Large ribosomal subunit protein uL11 (147 aa).

Belongs to the universal ribosomal protein uL11 family. In terms of assembly, part of the ribosomal stalk of the 50S ribosomal subunit. Interacts with L10 and the large rRNA to form the base of the stalk. L10 forms an elongated spine to which L12 dimers bind in a sequential fashion forming a multimeric L10(L12)X complex. Post-translationally, one or more lysine residues are methylated.

Functionally, forms part of the ribosomal stalk which helps the ribosome interact with GTP-bound translation factors. The polypeptide is Large ribosomal subunit protein uL11 (Parabacteroides distasonis (strain ATCC 8503 / DSM 20701 / CIP 104284 / JCM 5825 / NCTC 11152)).